A 289-amino-acid polypeptide reads, in one-letter code: 4-diphosphocytidyl-2-C-methyl-D-erythritol kinase (289 aa).

Residue K10 is part of the active site. Position 99-109 (99-109 (PMGGGLGGGSS)) interacts with ATP. The active site involves D141.

Belongs to the GHMP kinase family. IspE subfamily. In terms of assembly, homodimer.

It catalyses the reaction 4-CDP-2-C-methyl-D-erythritol + ATP = 4-CDP-2-C-methyl-D-erythritol 2-phosphate + ADP + H(+). The protein operates within isoprenoid biosynthesis; isopentenyl diphosphate biosynthesis via DXP pathway; isopentenyl diphosphate from 1-deoxy-D-xylulose 5-phosphate: step 3/6. In terms of biological role, catalyzes the phosphorylation of the position 2 hydroxy group of 4-diphosphocytidyl-2C-methyl-D-erythritol. The chain is 4-diphosphocytidyl-2-C-methyl-D-erythritol kinase from Enterobacter sp. (strain 638).